The primary structure comprises 388 residues: Chalcone synthase DIV (388 aa).

Residue C164 is part of the active site.

It belongs to the thiolase-like superfamily. Chalcone/stilbene synthases family.

The catalysed reaction is (E)-4-coumaroyl-CoA + 3 malonyl-CoA + 3 H(+) = 2',4,4',6'-tetrahydroxychalcone + 3 CO2 + 4 CoA. The protein operates within secondary metabolite biosynthesis; flavonoid biosynthesis. Its function is as follows. The primary product of this enzyme is 4,2',4',6'-tetrahydroxychalcone (also termed naringenin-chalcone or chalcone) which can under specific conditions spontaneously isomerize into naringenin. In Ipomoea batatas (Sweet potato), this protein is Chalcone synthase DIV (CHS-DIV).